Reading from the N-terminus, the 158-residue chain is uncharacterized protein (158 aa).

The tract at residues 1-26 (MRASRSPPSPRRCHHHHEATGAASGA) is disordered.

This is an uncharacterized protein from Homo sapiens (Human).